The chain runs to 173 residues: Protein-export protein SecB (173 aa).

It belongs to the SecB family. Homotetramer, a dimer of dimers. One homotetramer interacts with 1 SecA dimer.

Its subcellular location is the cytoplasm. In terms of biological role, one of the proteins required for the normal export of preproteins out of the cell cytoplasm. It is a molecular chaperone that binds to a subset of precursor proteins, maintaining them in a translocation-competent state. It also specifically binds to its receptor SecA. In Novosphingobium aromaticivorans (strain ATCC 700278 / DSM 12444 / CCUG 56034 / CIP 105152 / NBRC 16084 / F199), this protein is Protein-export protein SecB.